We begin with the raw amino-acid sequence, 658 residues long: ATP-dependent zinc metalloprotease FtsH 4 (658 aa).

Positions methionine 1–glycine 22 are disordered. Residues methionine 1 to threonine 28 are Cytoplasmic-facing. Residues tryptophan 29 to proline 49 form a helical membrane-spanning segment. The Extracellular portion of the chain corresponds to serine 50–serine 149. Residues glutamine 95–threonine 114 are disordered. A helical transmembrane segment spans residues valine 150 to tyrosine 170. Over leucine 171 to valine 658 the chain is Cytoplasmic. ATP is bound at residue glycine 243–threonine 250. Histidine 464 contacts Zn(2+). Glutamate 465 is a catalytic residue. Histidine 468 and aspartate 540 together coordinate Zn(2+).

The protein in the central section; belongs to the AAA ATPase family. This sequence in the C-terminal section; belongs to the peptidase M41 family. In terms of assembly, homohexamer. Requires Zn(2+) as cofactor.

The protein localises to the cell membrane. Acts as a processive, ATP-dependent zinc metallopeptidase for both cytoplasmic and membrane proteins. Plays a role in the quality control of integral membrane proteins. The protein is ATP-dependent zinc metalloprotease FtsH 4 (ftsh4) of Sphaerobacter thermophilus (strain ATCC 49802 / DSM 20745 / KCCM 41009 / NCIMB 13125 / S 6022).